The following is a 152-amino-acid chain: Deoxyuridine 5'-triphosphate nucleotidohydrolase (152 aa).

Substrate-binding positions include Arg71–Gly73, Asn84, Leu88–Asp90, and Met98.

The protein belongs to the dUTPase family. The cofactor is Mg(2+).

It carries out the reaction dUTP + H2O = dUMP + diphosphate + H(+). It functions in the pathway pyrimidine metabolism; dUMP biosynthesis; dUMP from dCTP (dUTP route): step 2/2. This enzyme is involved in nucleotide metabolism: it produces dUMP, the immediate precursor of thymidine nucleotides and it decreases the intracellular concentration of dUTP so that uracil cannot be incorporated into DNA. The sequence is that of Deoxyuridine 5'-triphosphate nucleotidohydrolase from Coxiella burnetii (strain RSA 331 / Henzerling II).